The primary structure comprises 428 residues: Flap endonuclease 1-B (428 aa).

Residues Met1 to Arg132 form an N-domain region. Asp34 lines the Mg(2+) pocket. Arg98 contacts DNA. Positions 114, 186, 188, 207, and 209 each coordinate Mg(2+). Residues Ala150–His281 are I-domain. Glu186 serves as a coordination point for DNA. Gly259 and Asp261 together coordinate DNA. Asp261 contacts Mg(2+).

Belongs to the XPG/RAD2 endonuclease family. FEN1 subfamily. Interacts with PCNA. Three molecules of FEN1 bind to one PCNA trimer with each molecule binding to one PCNA monomer. PCNA stimulates the nuclease activity without altering cleavage specificity. It depends on Mg(2+) as a cofactor. In terms of processing, phosphorylated. Phosphorylation upon DNA damage induces relocalization to the nuclear plasma.

The protein resides in the nucleus. Its subcellular location is the nucleolus. The protein localises to the nucleoplasm. It is found in the mitochondrion. In terms of biological role, structure-specific nuclease with 5'-flap endonuclease and 5'-3' exonuclease activities involved in DNA replication and repair. During DNA replication, cleaves the 5'-overhanging flap structure that is generated by displacement synthesis when DNA polymerase encounters the 5'-end of a downstream Okazaki fragment. It enters the flap from the 5'-end and then tracks to cleave the flap base, leaving a nick for ligation. Also involved in the long patch base excision repair (LP-BER) pathway, by cleaving within the apurinic/apyrimidinic (AP) site-terminated flap. Acts as a genome stabilization factor that prevents flaps from equilibrating into structures that lead to duplications and deletions. Also possesses 5'-3' exonuclease activity on nicked or gapped double-stranded DNA, and exhibits RNase H activity. Also involved in replication and repair of rDNA and in repairing mitochondrial DNA. The sequence is that of Flap endonuclease 1-B from Sorghum bicolor (Sorghum).